Consider the following 96-residue polypeptide: Small ribosomal subunit protein bS18 (96 aa).

This sequence belongs to the bacterial ribosomal protein bS18 family. In terms of assembly, part of the 30S ribosomal subunit. Forms a tight heterodimer with protein bS6.

Its function is as follows. Binds as a heterodimer with protein bS6 to the central domain of the 16S rRNA, where it helps stabilize the platform of the 30S subunit. This is Small ribosomal subunit protein bS18 from Borrelia garinii subsp. bavariensis (strain ATCC BAA-2496 / DSM 23469 / PBi) (Borreliella bavariensis).